The chain runs to 395 residues: Leukosialin (395 aa).

The first 19 residues, 1–19 (MALHLLLLFGACWVQVASP), serve as a signal peptide directing secretion. Over 20 to 248 (DSLQRTTMLP…TRSPSQESSG (229 aa)) the chain is Extracellular. Residues 27–56 (MLPSTPHITAPSTSEAQNASPSVSVGSGTV) show a composition bias toward polar residues. Residues 27–245 (MLPSTPHITA…PITTRSPSQE (219 aa)) are disordered. The span at 73-88 (SLTPLETTELSSLETS) shows a compositional bias: low complexity. 2 stretches are compositionally biased toward polar residues: residues 89–111 (AGAS…SKTS) and 145–154 (TAASTSISKG). Low complexity predominate over residues 155–166 (TSAPPTTVTTSS). N-linked (GlcNAc...) asparagine glycosylation occurs at asparagine 167. Polar residues predominate over residues 167 to 196 (NETSGPSVATTVSSKTSGPPVTTATGSLGP). Residues 205–241 (ATTATSSVESSSVARGTSVSSRKTSTTSTQDPITTRS) show a composition bias toward low complexity. A helical membrane pass occupies residues 249–271 (MLLVPMLIALVVVLALVALLLLW). The required for interaction with EZR, MSN and RDX and for co-localization to microvilli stretch occupies residues 272 to 302 (RQRQKRRTGALTLSGGGKRNGVVDAWAGPAR). Residues 272–395 (RQRQKRRTGA…AKDEAAPQSL (124 aa)) lie on the Cytoplasmic side of the membrane. A Nuclear localization signal motif is present at residues 276 to 290 (KRRTGALTLSGGGKR). Serine 285 and serine 328 each carry phosphoserine. A disordered region spans residues 303–395 (VPDEEATTTS…AKDEAAPQSL (93 aa)). Residues 327 to 338 (GSGQRPTLTTFF) are compositionally biased toward polar residues. A Phosphothreonine modification is found at threonine 333. A phosphoserine mark is found at serine 339 and serine 343. Serine 347 carries the post-translational modification Phosphoserine; by PKC/PRKCQ. At serine 371 the chain carries Phosphoserine. Phosphothreonine is present on threonine 378. Residues 385 to 395 (QAKDEAAPQSL) show a composition bias toward basic and acidic residues.

Interacts with SIGLEC1. As to quaternary structure, interacts with isoform 2 of HIPK2. Interacts with CTNNB1. Interacts with RDX (via FERM domain). Interacts with EZR. Interacts with MSN. Post-translationally, phosphorylation at Ser-347 is regulated by chemokines, requires its association with ERM proteins (EZR, RDX and MSN) and is essential for its function in the regulation of T-cell trafficking to lymph nodes. In terms of processing, has a high content of sialic acid and O-linked carbohydrate structures. Cleavage by CTSG releases its extracellular domain and triggers its intramembrane proteolysis by gamma-secretase releasing the CD43 cytoplasmic tail chain (CD43-ct) which translocates to the nucleus. Post-translationally, sumoylated. Cell surface of thymocytes, T-lymphocytes, neutrophils, plasma cells and myelomas.

Its subcellular location is the membrane. It is found in the cell projection. The protein localises to the microvillus. The protein resides in the uropodium. It localises to the nucleus. Its subcellular location is the PML body. In terms of biological role, predominant cell surface sialoprotein of leukocytes which regulates multiple T-cell functions, including T-cell activation, proliferation, differentiation, trafficking and migration. Positively regulates T-cell trafficking to lymph-nodes via its association with ERM proteins (EZR, RDX and MSN). Negatively regulates Th2 cell differentiation and predisposes the differentiation of T-cells towards a Th1 lineage commitment. Promotes the expression of IFN-gamma by T-cells during T-cell receptor (TCR) activation of naive cells and induces the expression of IFN-gamma by CD4(+) T-cells and to a lesser extent by CD8(+) T-cells. Plays a role in preparing T-cells for cytokine sensing and differentiation into effector cells by inducing the expression of cytokine receptors IFNGR and IL4R, promoting IFNGR and IL4R signaling and by mediating the clustering of IFNGR with TCR. Acts as a major E-selectin ligand responsible for Th17 cell rolling on activated vasculature and recruitment during inflammation. Mediates Th17 cells, but not Th1 cells, adhesion to E-selectin. Acts as a T-cell counter-receptor for SIGLEC1. Protects cells from apoptotic signals, promoting cell survival. This is Leukosialin (Spn) from Mus musculus (Mouse).